A 403-amino-acid polypeptide reads, in one-letter code: tRNA(Met) cytidine acetate ligase (403 aa).

Residues 7-20 (IVEYNPFHNGHLYH), Gly-102, Asn-168, and Arg-193 contribute to the ATP site.

Belongs to the TmcAL family.

Its subcellular location is the cytoplasm. It carries out the reaction cytidine(34) in elongator tRNA(Met) + acetate + ATP = N(4)-acetylcytidine(34) in elongator tRNA(Met) + AMP + diphosphate. Catalyzes the formation of N(4)-acetylcytidine (ac(4)C) at the wobble position of elongator tRNA(Met), using acetate and ATP as substrates. First activates an acetate ion to form acetyladenylate (Ac-AMP) and then transfers the acetyl group to tRNA to form ac(4)C34. This chain is tRNA(Met) cytidine acetate ligase, found in Clostridium tetani (strain Massachusetts / E88).